A 146-amino-acid polypeptide reads, in one-letter code: Large ribosomal subunit protein uL13 (146 aa).

It belongs to the universal ribosomal protein uL13 family. Part of the 50S ribosomal subunit.

This protein is one of the early assembly proteins of the 50S ribosomal subunit, although it is not seen to bind rRNA by itself. It is important during the early stages of 50S assembly. The protein is Large ribosomal subunit protein uL13 of Mycoplasma genitalium (strain ATCC 33530 / DSM 19775 / NCTC 10195 / G37) (Mycoplasmoides genitalium).